The sequence spans 308 residues: Ribosomal RNA small subunit methyltransferase H (308 aa).

Residues 34-36 (GGH), D54, F80, D101, and Q108 each bind S-adenosyl-L-methionine.

The protein belongs to the methyltransferase superfamily. RsmH family.

The protein localises to the cytoplasm. The enzyme catalyses cytidine(1402) in 16S rRNA + S-adenosyl-L-methionine = N(4)-methylcytidine(1402) in 16S rRNA + S-adenosyl-L-homocysteine + H(+). Its function is as follows. Specifically methylates the N4 position of cytidine in position 1402 (C1402) of 16S rRNA. This chain is Ribosomal RNA small subunit methyltransferase H, found in Ureaplasma urealyticum serovar 10 (strain ATCC 33699 / Western).